The chain runs to 967 residues: A disintegrin and metalloproteinase with thrombospondin motifs 1 (967 aa).

Disordered stretches follow at residues 1–27 and 192–250; these read MQRA…APGS and GDVG…SIRK. The N-terminal stretch at 1–49 is a signal peptide; it reads MQRAVPEGFGRRKLGSDMGNAERAPGSRSFGPVPTLLLLAAALLAVSDA. A propeptide spanning residues 50-252 is cleaved from the precursor; that stretch reads LGRPSEEDEE…TGTGSIRKKR (203 aa). The Cysteine switch signature appears at 196 to 203; it reads GTCGVVDD. Zn(2+) is bound at residue Cys198. Residues 203–212 show a composition bias toward basic and acidic residues; it reads DEPRPTGKAE. The span at 213 to 226 shows a compositional bias: acidic residues; the sequence is TEDEDEGTEGEDEG. A Peptidase M12B domain is found at 258 to 467; sequence RYVETMLVAD…GHGECLMDKP (210 aa). Positions 261, 344, and 351 each coordinate Ca(2+). 4 disulfide bridges follow: Cys333/Cys385, Cys362/Cys367, Cys379/Cys462, and Cys417/Cys446. His401 contributes to the Zn(2+) binding site. Glu402 is a catalytic residue. Residues His405 and His411 each coordinate Zn(2+). Residues Cys462 and Asp465 each contribute to the Ca(2+) site. In terms of domain architecture, Disintegrin spans 476–559; it reads DLPGTSYDAN…DRKHFDTPFH (84 aa). 4 cysteine pairs are disulfide-bonded: Cys488–Cys511, Cys499–Cys521, Cys506–Cys540, and Cys534–Cys545. Residue Asn547 is glycosylated (N-linked (GlcNAc...) asparagine). A TSP type-1 1 domain is found at 559–614; sequence HGSWGMWGPWGDCSRTCGGGVQYTMRECDNPVPKNGGKYCEGKRVRYRSCNLEDCP. Disulfide bonds link Cys571/Cys608, Cys575/Cys613, and Cys586/Cys598. Asn720 and Asn764 each carry an N-linked (GlcNAc...) asparagine glycan. A spacer region spans residues 725–849; that stretch reads KKISGSVTSA…YFVKKKKESF (125 aa). 2 consecutive TSP type-1 domains span residues 854-905 and 908-967; these read TFSA…RPCA and PCPQ…AECS.

Zn(2+) is required as a cofactor. The precursor is cleaved by a furin endopeptidase. Post-translationally, glycosylated. Can be O-fucosylated by POFUT2 on a serine or a threonine residue found within the consensus sequence C1-X(2)-(S/T)-C2-G of the TSP type-1 repeat domains where C1 and C2 are the first and second cysteine residue of the repeat, respectively. Fucosylated repeats can then be further glycosylated by the addition of a beta-1,3-glucose residue by the glucosyltransferase, B3GALTL. Fucosylation mediates the efficient secretion of ADAMTS family members. Can also be C-glycosylated with one or two mannose molecules on tryptophan residues within the consensus sequence W-X-X-W of the TPRs, and N-glycosylated. These other glycosylations can also facilitate secretion.

It localises to the secreted. Its subcellular location is the extracellular space. It is found in the extracellular matrix. In terms of biological role, metalloprotease which cleaves aggrecan, a cartilage proteoglycan, at the '1938-Glu-|-Leu-1939' site (within the chondroitin sulfate attachment domain), and may be involved in its turnover. Also cleaves COMP. Has angiogenic inhibitor activity. May play a critical role in follicular rupture. This chain is A disintegrin and metalloproteinase with thrombospondin motifs 1 (ADAMTS1), found in Homo sapiens (Human).